A 306-amino-acid polypeptide reads, in one-letter code: D-alanine--D-alanine ligase (306 aa).

The 203-residue stretch at 101 to 303 (KYLWQGCGLP…FSQLVARILE (203 aa)) folds into the ATP-grasp domain. 134–189 (IDALGLPLFVKPSREGSSVGISRVNQASELQAALQEAFRFDDEVLVEAFLSGPEYT) contributes to the ATP binding site. Residues Asp-257, Glu-270, and Asn-272 each coordinate Mg(2+).

The protein belongs to the D-alanine--D-alanine ligase family. Mg(2+) is required as a cofactor. Mn(2+) serves as cofactor.

The protein resides in the cytoplasm. The enzyme catalyses 2 D-alanine + ATP = D-alanyl-D-alanine + ADP + phosphate + H(+). It functions in the pathway cell wall biogenesis; peptidoglycan biosynthesis. In terms of biological role, cell wall formation. The sequence is that of D-alanine--D-alanine ligase from Erwinia tasmaniensis (strain DSM 17950 / CFBP 7177 / CIP 109463 / NCPPB 4357 / Et1/99).